The primary structure comprises 244 residues: Protein crossbronx (244 aa).

In terms of domain architecture, UBC core spans 20–176 (QQEYKILAEY…VQENIKESKE (157 aa)). A disordered region spans residues 209-244 (AGRSKQTEPSAQQGNGGHATGLSWVKEGEFKPLSIE).

It belongs to the ubiquitin-conjugating enzyme family. FTS subfamily.

In Drosophila simulans (Fruit fly), this protein is Protein crossbronx (cbx).